We begin with the raw amino-acid sequence, 466 residues long: mRNA-capping enzyme subunit alpha (466 aa).

Lysine 67 (N6-GMP-lysine intermediate) is an active-site residue. The segment at 408-466 (REQGLKNAQKQFNHQASARSSLSQQHSTEPEQSQDQPKYVDDDDDNWSDDEPDTKRQKI) is disordered. Polar residues predominate over residues 413–443 (KNAQKQFNHQASARSSLSQQHSTEPEQSQDQ). Positions 448-459 (DDDDDNWSDDEP) are enriched in acidic residues.

The protein belongs to the eukaryotic GTase family. As to quaternary structure, heterodimer. The mRNA-capping enzyme is composed of two separate chains alpha and beta, respectively a mRNA guanylyltransferase and an mRNA 5'-triphosphate monophosphatase.

Its subcellular location is the nucleus. It catalyses the reaction a 5'-end diphospho-ribonucleoside in mRNA + GTP + H(+) = a 5'-end (5'-triphosphoguanosine)-ribonucleoside in mRNA + diphosphate. Its function is as follows. Second step of mRNA capping. Transfer of the GMP moiety of GTP to the 5'-end of RNA via an enzyme-GMP covalent reaction intermediate. This is mRNA-capping enzyme subunit alpha (CEG1) from Kluyveromyces lactis (strain ATCC 8585 / CBS 2359 / DSM 70799 / NBRC 1267 / NRRL Y-1140 / WM37) (Yeast).